Here is a 148-residue protein sequence, read N- to C-terminus: D-aminoacyl-tRNA deacylase (148 aa).

A Gly-cisPro motif, important for rejection of L-amino acids motif is present at residues 137–138 (GP).

Belongs to the DTD family. In terms of assembly, homodimer.

Its subcellular location is the cytoplasm. It carries out the reaction glycyl-tRNA(Ala) + H2O = tRNA(Ala) + glycine + H(+). It catalyses the reaction a D-aminoacyl-tRNA + H2O = a tRNA + a D-alpha-amino acid + H(+). An aminoacyl-tRNA editing enzyme that deacylates mischarged D-aminoacyl-tRNAs. Also deacylates mischarged glycyl-tRNA(Ala), protecting cells against glycine mischarging by AlaRS. Acts via tRNA-based rather than protein-based catalysis; rejects L-amino acids rather than detecting D-amino acids in the active site. By recycling D-aminoacyl-tRNA to D-amino acids and free tRNA molecules, this enzyme counteracts the toxicity associated with the formation of D-aminoacyl-tRNA entities in vivo and helps enforce protein L-homochirality. The polypeptide is D-aminoacyl-tRNA deacylase (Oenococcus oeni (strain ATCC BAA-331 / PSU-1)).